Reading from the N-terminus, the 427-residue chain is Proteinase-activated receptor 1 (427 aa).

An N-terminal signal peptide occupies residues 1-21 (MGPRWLLLWAAGLGLCSPLVS). Residues 22–41 (ARTRGPRPGTDPTNGTLGPR) constitute a propeptide, removed for receptor activation. The segment at 23–87 (RTRGPRPGTD…RSSPPQKSPP (65 aa)) is disordered. The N-linked (GlcNAc...) asparagine glycan is linked to asparagine 35. Over 42–104 (SFFLRNSNDG…SGYLTSAWLT (63 aa)) the chain is Extracellular. The span at 58–68 (PEDEDSSEGEF) shows a compositional bias: acidic residues. Residue asparagine 77 is glycosylated (N-linked (GlcNAc...) asparagine). The helical transmembrane segment at 105–130 (VFIPSVYTGVFLVSLPLNIMAVVVFV) threads the bilayer. Topologically, residues 131–139 (LKMKVKKPA) are cytoplasmic. A helical membrane pass occupies residues 140-159 (VVYMLHLAAADVLFVCVLPF). The Extracellular portion of the chain corresponds to 160–178 (KISYYFSGSDWRFGSAMCR). Cysteine 177 and cysteine 256 are joined by a disulfide. Residues 179–200 (FVTAAFYGNMYASIMLMTAISV) traverse the membrane as a helical segment. Residues 201–220 (DRFLAVVYPIQSLSWRTLGR) lie on the Cytoplasmic side of the membrane. Residues 221-241 (ASFICLAIWAMAIAGVAPLLL) form a helical membrane-spanning segment. The Extracellular portion of the chain corresponds to 242–270 (QEQATQVPGLNITACHDVLNQTLLEGYYS). N-linked (GlcNAc...) asparagine glycans are attached at residues asparagine 252 and asparagine 261. Residues 271 to 290 (YYFSAFSAVFFFVPLTLSTV) form a helical membrane-spanning segment. At 291 to 313 (SYVSIIRCLSSSTVANQNKKSRA) the chain is on the cytoplasmic side. The chain crosses the membrane as a helical span at residues 314-336 (LLLSAAVFCIFILCFGPTNILLL). At 337 to 351 (LHYAFLSSDPMTEAA) the chain is on the extracellular side. A helical membrane pass occupies residues 352 to 376 (YFAYLLCVCVSSISCCIDPLIYYYA). Topologically, residues 377–427 (SSECQRHLFAILHCKESSDPGSCNSSGQLMPSKMDTCSSNLSSSLYKKLLT) are cytoplasmic. Serine 420 is modified (phosphoserine).

The protein belongs to the G-protein coupled receptor 1 family. In terms of processing, proteolytic cleavage by thrombin generates a new N-terminus that functions as a tethered ligand. Also proteolytically cleaved by cathepsin CTSG. Phosphorylated in the C-terminal tail; probably mediating desensitization prior to the uncoupling and internalization of the receptor.

Its subcellular location is the cell membrane. High affinity receptor that binds the activated thrombin, leading to calcium release from intracellular stores. The thrombin-activated receptor signaling pathway is mediated through PTX-insensitive G proteins, activation of phospholipase C resulting in the production of 1D-myo-inositol 1,4,5-trisphosphate (InsP3) which binds to InsP3 receptors causing calcium release from the stores. In astrocytes, the calcium released into the cytosol allows the Ca(2+)-dependent release of L-glutamate into the synaptic cleft through BEST1, that targets the neuronal postsynaptic GRIN2A/NMDAR receptor resulting in the synaptic plasticity regulation. May play a role in platelets activation and in vascular development. Mediates up-regulation of pro-inflammatory cytokines, such as MCP-1/CCL2 and IL6, triggered by coagulation factor Xa (F10) in cardiac fibroblasts and umbilical vein endothelial cells. This Bos taurus (Bovine) protein is Proteinase-activated receptor 1.